The primary structure comprises 212 residues: Translation initiation factor IF-3 (212 aa).

The disordered stretch occupies residues 171–212 (PKSASKKGHTPPKTQVEASKQANESAETEEEKKRCHPTKPVL). The span at 182–195 (PKTQVEASKQANES) shows a compositional bias: polar residues.

Belongs to the IF-3 family. In terms of assembly, monomer.

It is found in the cytoplasm. In terms of biological role, IF-3 binds to the 30S ribosomal subunit and shifts the equilibrium between 70S ribosomes and their 50S and 30S subunits in favor of the free subunits, thus enhancing the availability of 30S subunits on which protein synthesis initiation begins. This is Translation initiation factor IF-3 from Porphyromonas gingivalis (strain ATCC 33277 / DSM 20709 / CIP 103683 / JCM 12257 / NCTC 11834 / 2561).